We begin with the raw amino-acid sequence, 365 residues long: Chorismate synthase (365 aa).

Residues arginine 48 and arginine 54 each coordinate NADP(+). FMN is bound by residues 125–127 (RSS), 238–239 (NA), glycine 278, 293–297 (KPTSS), and arginine 319.

It belongs to the chorismate synthase family. In terms of assembly, homotetramer. The cofactor is FMNH2.

The catalysed reaction is 5-O-(1-carboxyvinyl)-3-phosphoshikimate = chorismate + phosphate. The protein operates within metabolic intermediate biosynthesis; chorismate biosynthesis; chorismate from D-erythrose 4-phosphate and phosphoenolpyruvate: step 7/7. Catalyzes the anti-1,4-elimination of the C-3 phosphate and the C-6 proR hydrogen from 5-enolpyruvylshikimate-3-phosphate (EPSP) to yield chorismate, which is the branch point compound that serves as the starting substrate for the three terminal pathways of aromatic amino acid biosynthesis. This reaction introduces a second double bond into the aromatic ring system. The protein is Chorismate synthase of Vesicomyosocius okutanii subsp. Calyptogena okutanii (strain HA).